A 508-amino-acid chain; its full sequence is MYIGIDDTDSREKYCTTYVGTLIVEELLKLGYILEEPRLIRMNPMVKYKTRGNGGVCLKIVGKIGAEDTKKNNSNKNNSNNGTPKNIEYDYKQALEDFNRGNIDYEALSKESNCKSSLKSHIKSLKSLKSYRTTLNPEITEESYKLSKSEYLEVKTIVSSIVEKYTDFDCSTTNPGIVLINSRLTRQKKAILKNYYNSVLTEIVSLDEAEAIIKKVGAEYIKYKKGLGIIGSLGAISSYFSENQTYTYELLAYRENDKWGTERYVIDSSVVEMDKMTYPYTFNNVDNNKNIIAPNTKCPVLYGIRGVSKEILFNAKEIVESENIDKYMIYRTNQGTDHHLRIMNIADARENTGAILSGYISEEFTEITGGHVLIELTDSTGSINCIAYEPTKKFRHIIRELAIGDLITVYGTIREEPYQLNIEKINVVKLNNLYEKVKKCECGGTLKSKGVSSGYKCNKCGKRLKYDEIPKIQIVRNLREGFYEVPPSARRHLSMPLSLINYLPNNLR.

Positions 367–427 (ITGGHVLIEL…YQLNIEKINV (61 aa)) form a DNA-binding region, OB.

It belongs to the TiaS family.

The protein resides in the cytoplasm. The catalysed reaction is cytidine(34) in tRNA(Ile2) + agmatine + ATP + H2O = 2-agmatinylcytidine(34) in tRNA(Ile2) + AMP + 2 phosphate + 2 H(+). In terms of biological role, ATP-dependent agmatine transferase that catalyzes the formation of 2-agmatinylcytidine (agm2C) at the wobble position (C34) of tRNA(Ile2), converting the codon specificity from AUG to AUA. This chain is tRNA(Ile2) 2-agmatinylcytidine synthetase TiaS, found in Methanococcus voltae (strain ATCC BAA-1334 / A3).